We begin with the raw amino-acid sequence, 322 residues long: Malate dehydrogenase (322 aa).

Residues 10 to 15 (GSGQIG) and Asp-34 each bind NAD(+). The substrate site is built by Arg-83 and Arg-89. NAD(+)-binding positions include Asn-96 and 119–121 (ITN). 2 residues coordinate substrate: Asn-121 and Arg-152. The active-site Proton acceptor is His-176.

It belongs to the LDH/MDH superfamily. MDH type 3 family.

The enzyme catalyses (S)-malate + NAD(+) = oxaloacetate + NADH + H(+). Functionally, catalyzes the reversible oxidation of malate to oxaloacetate. This is Malate dehydrogenase from Bradyrhizobium sp. (strain ORS 278).